Here is a 274-residue protein sequence, read N- to C-terminus: Diaminopimelate epimerase (274 aa).

Positions 11, 44, and 64 each coordinate substrate. The active-site Proton donor is the Cys-73. Residues 74-75, Asn-157, Asn-190, and 208-209 contribute to the substrate site; these read GN and ER. The active-site Proton acceptor is Cys-217. 218-219 provides a ligand contact to substrate; that stretch reads GS.

The protein belongs to the diaminopimelate epimerase family. In terms of assembly, homodimer.

The protein resides in the cytoplasm. It catalyses the reaction (2S,6S)-2,6-diaminopimelate = meso-2,6-diaminopimelate. The protein operates within amino-acid biosynthesis; L-lysine biosynthesis via DAP pathway; DL-2,6-diaminopimelate from LL-2,6-diaminopimelate: step 1/1. In terms of biological role, catalyzes the stereoinversion of LL-2,6-diaminopimelate (L,L-DAP) to meso-diaminopimelate (meso-DAP), a precursor of L-lysine and an essential component of the bacterial peptidoglycan. The protein is Diaminopimelate epimerase of Enterobacter sp. (strain 638).